Consider the following 247-residue polypeptide: Carboxy-S-adenosyl-L-methionine synthase (247 aa).

S-adenosyl-L-methionine is bound by residues Y39, 64 to 66, 89 to 90, 117 to 118, N132, and R199; these read GCS, DN, and DI.

The protein belongs to the class I-like SAM-binding methyltransferase superfamily. Cx-SAM synthase family. As to quaternary structure, homodimer.

The enzyme catalyses prephenate + S-adenosyl-L-methionine = carboxy-S-adenosyl-L-methionine + 3-phenylpyruvate + H2O. Functionally, catalyzes the conversion of S-adenosyl-L-methionine (SAM) to carboxy-S-adenosyl-L-methionine (Cx-SAM). The protein is Carboxy-S-adenosyl-L-methionine synthase of Shigella sonnei (strain Ss046).